The following is a 298-amino-acid chain: Mitochondrial distribution and morphology protein 12 (298 aa).

In terms of domain architecture, SMP-LTD spans 1-298; that stretch reads MSIELDWTGL…VYPHFYTLYL (298 aa). The disordered stretch occupies residues 118 to 142; that stretch reads SEHEESLSRWSDTESETGTCDSSSL. Residues 133–142 show a composition bias toward polar residues; the sequence is ETGTCDSSSL.

Belongs to the MDM12 family. As to quaternary structure, component of the ER-mitochondria encounter structure (ERMES) or MDM complex, composed of MMM1, MDM10, MDM12 and MDM34. An MMM1 homodimer associates with one molecule of MDM12 on each side in a pairwise head-to-tail manner, and the SMP-LTD domains of MMM1 and MDM12 generate a continuous hydrophobic tunnel for phospholipid trafficking.

Its subcellular location is the mitochondrion outer membrane. It localises to the endoplasmic reticulum membrane. Component of the ERMES/MDM complex, which serves as a molecular tether to connect the endoplasmic reticulum (ER) and mitochondria. Components of this complex are involved in the control of mitochondrial shape and protein biogenesis, and function in nonvesicular lipid trafficking between the ER and mitochondria. MDM12 is required for the interaction of the ER-resident membrane protein MMM1 and the outer mitochondrial membrane-resident beta-barrel protein MDM10. The MDM12-MMM1 subcomplex functions in the major beta-barrel assembly pathway that is responsible for biogenesis of all mitochondrial outer membrane beta-barrel proteins, and acts in a late step after the SAM complex. The MDM10-MDM12-MMM1 subcomplex further acts in the TOM40-specific pathway after the action of the MDM12-MMM1 complex. Essential for establishing and maintaining the structure of mitochondria and maintenance of mtDNA nucleoids. The polypeptide is Mitochondrial distribution and morphology protein 12 (Malassezia globosa (strain ATCC MYA-4612 / CBS 7966) (Dandruff-associated fungus)).